Reading from the N-terminus, the 1744-residue chain is MNNTHHHTNGYRTEKPKNEEDLEDPYANLSDFYKNHPAARNEACSSASNGGSKSVKMEPKVEKNEEFEEYIGDPVRLEDMEPFARPSLRDDAPLSSILHPDLDGIDPRIFFKDFNPNKTLRFSRLFAQNIKHTSRAEIWWASRTFSKHQRKKEPEEPLADDVIVGAKKLKLNIIEKVPRVMLADDEEERMRRPILTDAEEMAKKNEEGTVVQPWRTGPAKIWYDMMNLPMTSQAVNYGFKLKKSPQKVSIRSGKPLNYRTPDDLPSTSSGPAPNSAPFLDKVEVIDKSCEASTSEDILLPYQVIEWENDVILDGEEVKDQLLEEFSNGRGCGWIPTQYTRTYEHFVYAANNNAFEQMFDGKSAPINLTGPDSAILPTPGHSIFPSAPCDLDILPWETNIIWDADAMPSTLEPIDFLVDFQDDPLIYGMPEDRRHDEGPDHHHHHHHHRKDGQYTKKSKMILGQVQQRQKQEEDEQMESTMAQFTDNDPFNLSNDDYYVPKATSKTLSNNSLLIQHSTPATNIATHFFPTHPSAFRLRYWHRTPFTRRIVRHWQPMRFQPIQTPVKHQQRVAAMREAMRQAQGGGEVFYMRDVQDLSGKDETLVMIEYSEEHPVILSQPGMASKMKNYFKRRQANDSEPTFTFGELAFSHQIPFLGQLQPGQSLQSIENMLYRAPIYLHKRQNTDFLLIRSMNQWYIRPLPSIFVAGQQCPLYEVPSPNSKRATVFVRDFLFAFIYRLFWASDSSPRRLKMDDVRNAFPHYAESNIRKRLKMCSTFVRQGSETYWSLKPDFRLPSKEEVLSMVTPEMCCAQYSMMAAEQRLKDAGYGEKYFFTPENDEGSEDEVTIEDEIKCAPWNTTRAFLASQREKCLLDQTGIADPTGCGQGFSYVRVSQKPHKDENATPVPKKLVTGTNADLRKLPLKEAKQICRGYGVKEEEISALTRWEIIDVIRTLSTQAAKATKDGEIIAVSGMARFARGNTRFSSADMQEKYRKHCQRIFDQQNQTLANTDPISTDDDSTDADSDNEELASRLESMLEANKGKKNISMSEKAKIDFETEEKEREDLKRMIHGTTNQVEKGEKKEEGEVTAEEKKSASQFGEDVAMSASKISGITANQQLKIYRTCKGPDGKDVTRIEIVTRPQLIEAYTRIRMTRDDTFIQVYAQMDEQYKEEKRKKKRRLQDQIRRMKKNEEKAAHKVQKMTEKKVKPIKPPNPNLQKMRCSACHAYGHMKTNRNCPLYGKDPLTPLKEEDEGSTIMTSVSSASLVAPDAVQVDGTKVKFNLNFAEIRKEQNREEKLKRKLAKMAEAAVRERQMAHLMEYGGGASSSGGAGGGGSGIGGSTGGGITDNDDDDRFSQISGTSSFLNGPPGAIRGGNRNSSVSGSKRRSSMMPEEDYLQGPLKVAHRARADPKVVMSSMLTDIVNELKMISGSDAFVTPVNSKKVVDYYNIIKNPISLQEIKKKISEQSYLLRKDFLDDIKLMFDNSRMYNGDNNILTLTAQQMLQLAGKRMIEREQKFIGLEKQINPLLDTNDLIGFSYLLGEIVQKMKNIPKSALFHTRVDPKKIPAYYLKISDPMDLSIMEQKSKSQEYKSIDEFLKDAEKIYTNSVVFNGAESVYSLKAKEMFEMAEMLVKDQMDTLGELERNINPSAINDAAAAQRGLAMDSDDHMDEMEDHPTEEEEEDDDDEIMDDDMDIDATGYSYDHDDNVAVGQIFNDLAMSDSDEDERAEDVKRPANGDDNLLDSF.

Disordered regions lie at residues 1–65, 248–275, 429–488, 1001–1024, 1071–1098, and 1186–1213; these read MNNT…EKNE, VSIR…APNS, PEDR…DNDP, QNQT…DSDN, TTNQ…SQFG, and MKKN…PPNP. Positions 43–52 are enriched in polar residues; the sequence is ACSSASNGGS. Residues 55 to 64 show a composition bias toward basic and acidic residues; the sequence is VKMEPKVEKN. Over residues 429-439 the composition is skewed to basic and acidic residues; that stretch reads PEDRRHDEGPD. The segment covering 440–449 has biased composition (basic residues); the sequence is HHHHHHHHRK. Residues 477–488 show a composition bias toward polar residues; it reads ESTMAQFTDNDP. The span at 1012-1024 shows a compositional bias: acidic residues; that stretch reads STDDDSTDADSDN. Coiled coils occupy residues 1019–1080, 1161–1204, and 1282–1314; these read DADS…KGEK, YAQM…TEKK, and NFAE…RQMA. Basic and acidic residues-rich tracts occupy residues 1076-1093 and 1186-1205; these read EKGE…EKKS and MKKN…EKKV. Over residues 1319 to 1344 the composition is skewed to gly residues; it reads YGGGASSSGGAGGGGSGIGGSTGGGI. A disordered region spans residues 1319-1391; sequence YGGGASSSGG…SKRRSSMMPE (73 aa). A compositionally biased stretch (polar residues) spans 1354–1363; sequence SQISGTSSFL. Low complexity predominate over residues 1372 to 1381; the sequence is GGNRNSSVSG. Positions 1379 to 1386 match the Nuclear localization signal motif; sequence VSGSKRRS. 2 Bromo domains span residues 1404-1512 and 1537-1634; these read RARA…MIER and YLLG…VKDQ. A compositionally biased stretch (acidic residues) spans 1666–1694; it reads DHMDEMEDHPTEEEEEDDDDEIMDDDMDI. Disordered stretches follow at residues 1666-1702 and 1714-1744; these read DHMD…YSYD and NDLA…LDSF.

This sequence belongs to the TAF1 family. Component of the TFIID basal transcription factor complex, composed of TATA-box-binding protein tbp-1, and a number of TBP-associated factors (TAFs).

The protein resides in the nucleus. The TFIID basal transcription factor complex plays a major role in the initiation of RNA polymerase II (Pol II)-dependent transcription. TFIID recognizes and binds promoters via its subunit tbp-1, a TATA-box-binding protein, and promotes assembly of the pre-initiation complex (PIC). The TFIID complex consists of tbp-1 and TBP-associated factors (TAFs), including taf-1. May regulate RNA polymerase II activity and thereby may control transcription initiation by RNA polymerase II. Required for early embryonic development. Essential for embryonic transcription of several genes. The polypeptide is Transcription initiation factor TFIID subunit 1 (Caenorhabditis elegans).